Reading from the N-terminus, the 293-residue chain is MAQEKPGCSNPVPNGDCPIIEKMEKRTCALCPEGHEWSQIYFSPSANIVAHENCLLYSSGLVECEAPDLPNTVRNFDVKSVKKEIGRGRRLKCSFCKNKGATMGYDLQSCTKNYHLSCAMEDHAILQVDEDHGTYKLFCQKHAPEGQEPTQRDAAVKAPFLKKCQEAGLLNVLLEYILEKMDLIHGRLLNETASESDYEGIETLLFGCGLFGDTLRKFQEVINSKACEWEERQRLMKQQLEALADLQQNLCSFQENGDLDCSSSTSGSLLPPEDHQVRCQESPEVQAGSGDSL.

The C2HC pre-PHD-type zinc finger occupies 25-61; it reads KRTCALCPEGHEWSQIYFSPSANIVAHENCLLYSSGL. The PHD-type; degenerate zinc-finger motif lies at 91–143; that stretch reads LKCSFCKNKGATMGYDLQSCTKNYHLSCAMEDHAILQVDEDHGTYKLFCQKHA. A disordered region spans residues 262–293; that stretch reads SSSTSGSLLPPEDHQVRCQESPEVQAGSGDSL.

Its subcellular location is the nucleus. The sequence is that of PHD finger protein 11A (Phf11a) from Mus musculus (Mouse).